Here is a 423-residue protein sequence, read N- to C-terminus: RNA polymerase sigma factor SigA (423 aa).

Positions 1–76 (MKKSKRKNAQ…EEDLPIPKIS (76 aa)) are disordered. The span at 21-70 (VQEEAEELPEFPEGEPDPDLEDPDLALEDDLLDLPEEGEGLDLEEEEEDL) shows a compositional bias: acidic residues. The segment at 78–113 (SDPVRQYLHEIGQVPLLTLEEEVELARKVEEGMEAI) is sigma-70 factor domain-1. The tract at residues 187–257 (LIEANLRLVV…NRAIADQART (71 aa)) is sigma-70 factor domain-2. Positions 211-214 (DLIQ) match the Interaction with polymerase core subunit RpoC motif. Residues 266–344 (ETINKLSRTA…DEHLPSPVDA (79 aa)) form a sigma-70 factor domain-3 region. The tract at residues 357-409 (ALSKLSEREAMVLKLRKGLIDGREHTLEEVGAFFGVTRERIRQIENKALRKLK) is sigma-70 factor domain-4. Positions 383–402 (LEEVGAFFGVTRERIRQIEN) form a DNA-binding region, H-T-H motif.

Belongs to the sigma-70 factor family. RpoD/SigA subfamily. In terms of assembly, interacts transiently with the RNA polymerase catalytic core formed by RpoA, RpoB, RpoC and RpoZ (2 alpha, 1 beta, 1 beta' and 1 omega subunit) to form the RNA polymerase holoenzyme that can initiate transcription.

The protein resides in the cytoplasm. Sigma factors are initiation factors that promote the attachment of RNA polymerase to specific initiation sites and are then released. This sigma factor is the primary sigma factor during exponential growth. The sequence is that of RNA polymerase sigma factor SigA from Thermus thermophilus (strain ATCC BAA-163 / DSM 7039 / HB27).